The primary structure comprises 263 residues: Renal glandular kallikrein (263 aa).

The N-terminal stretch at 1–18 (MWFLILFLALFLGGIDAA) is a signal peptide. Residues 19–24 (PPVQSR) constitute a propeptide, activation peptide. The region spanning 25 to 260 (IIGGFNCEKN…YRSWIKDVMA (236 aa)) is the Peptidase S1 domain. 5 disulfides stabilise this stretch: Cys-31–Cys-175, Cys-50–Cys-66, Cys-153–Cys-221, Cys-186–Cys-200, and Cys-211–Cys-236. The active-site Charge relay system is His-65. Asn-102 is a glycosylation site (N-linked (GlcNAc...) asparagine). Asp-121 serves as the catalytic Charge relay system. Residue Ser-215 is the Charge relay system of the active site.

The protein belongs to the peptidase S1 family. Kallikrein subfamily.

The catalysed reaction is Preferential cleavage of Arg-|-Xaa bonds in small molecule substrates. Highly selective action to release kallidin (lysyl-bradykinin) from kininogen involves hydrolysis of Met-|-Xaa or Leu-|-Xaa.. Its function is as follows. Glandular kallikreins cleave Met-Lys and Arg-Ser bonds in kininogen to release Lys-bradykinin. The sequence is that of Renal glandular kallikrein from Mastomys natalensis (African soft-furred rat).